Reading from the N-terminus, the 134-residue chain is Neuropeptide-like peptide 11 (134 aa).

Positions 1–20 (MMSTLALVSLAIFGIAVVCA) are cleaved as a signal peptide. A propeptide spanning residues 21-106 (APKPATVPVA…YNRLIDAGKK (86 aa)) is cleaved from the precursor. Position 131 is an alanine amide (alanine 131).

The sequence is that of Neuropeptide-like peptide 11 (nlp-11) from Caenorhabditis elegans.